The sequence spans 329 residues: Acetoacetyl CoA synthase NphT7 (329 aa).

Catalysis depends on residues C115, H256, and N286.

Belongs to the thiolase-like superfamily. FabH family. As to quaternary structure, homodimer.

The protein resides in the cytoplasm. The catalysed reaction is malonyl-CoA + acetyl-CoA + H(+) = acetoacetyl-CoA + CO2 + CoA. Its pathway is metabolic intermediate biosynthesis; (R)-mevalonate biosynthesis. Its function is as follows. Catalyzes the condensation of acetyl-CoA and malonyl-CoA to form acetoacetyl-CoA and CoA. Does not accept malonyl-[acyl-carrier-protein] as a substrate. Can also convert malonyl-CoA into acetyl-CoA via decarboxylation of malonyl-CoA. The protein is Acetoacetyl CoA synthase NphT7 (nphT7) of Streptomyces sp. (strain CL190).